The following is a 22-amino-acid chain: Motilin (22 aa).

Over residues 1–11 the composition is skewed to polar residues; the sequence is FVPFFTQSDIQ. The tract at residues 1–22 is disordered; it reads FVPFFTQSDIQKMQEKERNKGQ. Over residues 12-22 the composition is skewed to basic and acidic residues; it reads KMQEKERNKGQ.

The protein belongs to the motilin family.

It localises to the secreted. In terms of biological role, plays an important role in the regulation of interdigestive gastrointestinal motility and indirectly causes rhythmic contraction of duodenal and colonic smooth muscle. This Gallus gallus (Chicken) protein is Motilin (MLN).